We begin with the raw amino-acid sequence, 261 residues long: UPF0328 protein ECU02_0020/ECU04_1700 (261 aa).

The tract at residues 1–20 is disordered; sequence MSITSIPQPHETNEQHHTEI. The segment covering 11-20 has biased composition (basic and acidic residues); that stretch reads ETNEQHHTEI.

The protein belongs to the UPF0328 family.

This is UPF0328 protein ECU02_0020/ECU04_1700 from Encephalitozoon cuniculi (strain GB-M1) (Microsporidian parasite).